A 423-amino-acid polypeptide reads, in one-letter code: MLDIKKIRADFDGVAAKLATRGVEKEKLEKLHDLDIKRRELIVKSEALKAERNSVSDEISQVKRAKGDASAQIAAMQKVSAEIKAIDAELAEIEENLNEIIIMLPNLPHESTPIGADEDDNVEVRRVGQTPTFNFEPKAHWDLGEDLGILDWERGGKVTGSRFLFYKGAGARLERALYNFMLDEHGKEGYTEMITPYMVNQESMFGTGQYPKFKEDTFELKDDRGFVLIPTAEVPLTNYYRGEILDGAELPIKFTAMSPSFRSEAGSAGRDTRGLIRLHQFHKVEMVKFAKPDQSYDELEKMTANAENILQKLGLAYRVVALSTGDMGFSAAKTYDLEVWIPAQNTYREISSCSNCEDFQARRAQIRYRDEEGKVQLLHTLNGSGLAVGRTVAAILENYQNEDGSITVPEVLRPYMGGLEVIK.

231–233 lines the L-serine pocket; that stretch reads TAE. 262-264 serves as a coordination point for ATP; that stretch reads RSE. Position 285 (Glu-285) interacts with L-serine. Residue 349–352 participates in ATP binding; sequence EISS. Position 384 (Ser-384) interacts with L-serine.

This sequence belongs to the class-II aminoacyl-tRNA synthetase family. Type-1 seryl-tRNA synthetase subfamily. In terms of assembly, homodimer. The tRNA molecule binds across the dimer.

The protein localises to the cytoplasm. The enzyme catalyses tRNA(Ser) + L-serine + ATP = L-seryl-tRNA(Ser) + AMP + diphosphate + H(+). It catalyses the reaction tRNA(Sec) + L-serine + ATP = L-seryl-tRNA(Sec) + AMP + diphosphate + H(+). It functions in the pathway aminoacyl-tRNA biosynthesis; selenocysteinyl-tRNA(Sec) biosynthesis; L-seryl-tRNA(Sec) from L-serine and tRNA(Sec): step 1/1. In terms of biological role, catalyzes the attachment of serine to tRNA(Ser). Is also able to aminoacylate tRNA(Sec) with serine, to form the misacylated tRNA L-seryl-tRNA(Sec), which will be further converted into selenocysteinyl-tRNA(Sec). The chain is Serine--tRNA ligase from Lactococcus lactis subsp. lactis (strain IL1403) (Streptococcus lactis).